A 381-amino-acid chain; its full sequence is Succinyl-diaminopimelate desuccinylase (381 aa).

Zn(2+) is bound at residue His-76. The active site involves Asp-78. Asp-107 serves as a coordination point for Zn(2+). The Proton acceptor role is filled by Glu-140. Glu-141, Glu-169, and His-354 together coordinate Zn(2+).

It belongs to the peptidase M20A family. DapE subfamily. In terms of assembly, homodimer. Requires Zn(2+) as cofactor. Co(2+) is required as a cofactor.

The enzyme catalyses N-succinyl-(2S,6S)-2,6-diaminopimelate + H2O = (2S,6S)-2,6-diaminopimelate + succinate. Its pathway is amino-acid biosynthesis; L-lysine biosynthesis via DAP pathway; LL-2,6-diaminopimelate from (S)-tetrahydrodipicolinate (succinylase route): step 3/3. In terms of biological role, catalyzes the hydrolysis of N-succinyl-L,L-diaminopimelic acid (SDAP), forming succinate and LL-2,6-diaminopimelate (DAP), an intermediate involved in the bacterial biosynthesis of lysine and meso-diaminopimelic acid, an essential component of bacterial cell walls. The protein is Succinyl-diaminopimelate desuccinylase of Gluconobacter oxydans (strain 621H) (Gluconobacter suboxydans).